The sequence spans 220 residues: Probable transcriptional regulator NRG2 (220 aa).

2 consecutive C2H2-type zinc fingers follow at residues 153–175 and 181–205; these read HFCK…NRIH and HICP…YRTH.

Its subcellular location is the nucleus. Functionally, transcriptional repressor. This Saccharomyces cerevisiae (strain ATCC 204508 / S288c) (Baker's yeast) protein is Probable transcriptional regulator NRG2 (NRG2).